The chain runs to 837 residues: ABC transporter A family member 8 (837 aa).

7 helical membrane passes run 29-49, 244-264, 303-323, 326-346, 356-376, 393-413, and 455-475; these read YFST…FYII, VVSL…FIFL, LIIC…FFLG, FLVL…MAFF, VAIG…LTFN, GAAF…SKVL, and LAYM…IEYA. The ABC transporter domain maps to 516–750; sequence IRGLSKTFNK…YGEGYSVQVI (235 aa). ATP is bound at residue 553 to 560; the sequence is GSNGAGKS.

This sequence belongs to the ABC transporter superfamily. ABCA family.

It is found in the membrane. This chain is ABC transporter A family member 8 (abcA8), found in Dictyostelium discoideum (Social amoeba).